Consider the following 92-residue polypeptide: Acylphosphatase (92 aa).

Positions 5–92 constitute an Acylphosphatase-like domain; that stretch reads GVTIYVYGRV…EDIADFIVRH (88 aa). Residues Arg20 and Asn38 contribute to the active site.

Belongs to the acylphosphatase family.

It catalyses the reaction an acyl phosphate + H2O = a carboxylate + phosphate + H(+). In Photorhabdus laumondii subsp. laumondii (strain DSM 15139 / CIP 105565 / TT01) (Photorhabdus luminescens subsp. laumondii), this protein is Acylphosphatase (acyP).